The chain runs to 89 residues: Putative membrane protein insertion efficiency factor (89 aa).

It belongs to the UPF0161 family.

The protein resides in the cell membrane. Could be involved in insertion of integral membrane proteins into the membrane. This chain is Putative membrane protein insertion efficiency factor, found in Exiguobacterium sp. (strain ATCC BAA-1283 / AT1b).